The sequence spans 330 residues: GMP reductase (330 aa).

Cys-180 functions as the Thioimidate intermediate in the catalytic mechanism. 209 to 232 (LIADGGIRHNGDIAKSVRFGASMV) is a binding site for NADP(+).

The protein belongs to the IMPDH/GMPR family. GuaC type 2 subfamily.

The catalysed reaction is IMP + NH4(+) + NADP(+) = GMP + NADPH + 2 H(+). In terms of biological role, catalyzes the irreversible NADPH-dependent deamination of GMP to IMP. It functions in the conversion of nucleobase, nucleoside and nucleotide derivatives of G to A nucleotides, and in maintaining the intracellular balance of A and G nucleotides. The chain is GMP reductase from Lactobacillus acidophilus (strain ATCC 700396 / NCK56 / N2 / NCFM).